The sequence spans 481 residues: Putative cytochrome P450 520B1 (481 aa).

Cys427 provides a ligand contact to heme.

This sequence belongs to the cytochrome P450 family. The cofactor is heme.

The polypeptide is Putative cytochrome P450 520B1 (cyp520B1) (Dictyostelium discoideum (Social amoeba)).